The following is a 481-amino-acid chain: UDP-N-acetylmuramoyl-L-alanyl-D-glutamate--L-lysine ligase (481 aa).

A UDP-N-acetyl-alpha-D-muramoyl-L-alanyl-D-glutamate-binding site is contributed by Ser42. 118–124 (GTKGKTT) contributes to the ATP binding site. Residues 160–161 (TT), Ser187, and Arg195 contribute to the UDP-N-acetyl-alpha-D-muramoyl-L-alanyl-D-glutamate site. Residue Lys229 is modified to N6-carboxylysine. The short motif at 404 to 407 (DDPN) is the L-lysine recognition motif element.

Belongs to the MurCDEF family. MurE subfamily. Post-translationally, carboxylation is probably crucial for Mg(2+) binding and, consequently, for the gamma-phosphate positioning of ATP.

It localises to the cytoplasm. The catalysed reaction is UDP-N-acetyl-alpha-D-muramoyl-L-alanyl-D-glutamate + L-lysine + ATP = UDP-N-acetyl-alpha-D-muramoyl-L-alanyl-gamma-D-glutamyl-L-lysine + ADP + phosphate + H(+). The protein operates within cell wall biogenesis; peptidoglycan biosynthesis. Functionally, catalyzes the addition of L-lysine to the nucleotide precursor UDP-N-acetylmuramoyl-L-alanyl-D-glutamate (UMAG) in the biosynthesis of bacterial cell-wall peptidoglycan. In Streptococcus pneumoniae (strain ATCC BAA-255 / R6), this protein is UDP-N-acetylmuramoyl-L-alanyl-D-glutamate--L-lysine ligase.